A 461-amino-acid chain; its full sequence is L-seryl-tRNA(Sec) selenium transferase (461 aa).

Residue Lys291 is modified to N6-(pyridoxal phosphate)lysine.

This sequence belongs to the SelA family. Pyridoxal 5'-phosphate is required as a cofactor.

It localises to the cytoplasm. It catalyses the reaction L-seryl-tRNA(Sec) + selenophosphate + H(+) = L-selenocysteinyl-tRNA(Sec) + phosphate. It participates in aminoacyl-tRNA biosynthesis; selenocysteinyl-tRNA(Sec) biosynthesis; selenocysteinyl-tRNA(Sec) from L-seryl-tRNA(Sec) (bacterial route): step 1/1. Converts seryl-tRNA(Sec) to selenocysteinyl-tRNA(Sec) required for selenoprotein biosynthesis. The chain is L-seryl-tRNA(Sec) selenium transferase from Caldanaerobacter subterraneus subsp. tengcongensis (strain DSM 15242 / JCM 11007 / NBRC 100824 / MB4) (Thermoanaerobacter tengcongensis).